A 125-amino-acid polypeptide reads, in one-letter code: MVRTKADSAGSSASSGSYRKAVAARAPRKTFGSSSSGSNHVTSPTGKKSESKYAGGNPVCVRPTPTWQKGIGEFFGSPSTSQPEKENRIPSDDEEAGGSGAGKAPRKSRPLPPDPSEEAADSDDE.

Residues 1–125 (MVRTKADSAG…SEEAADSDDE (125 aa)) form a disordered region. Positions 8-17 (SAGSSASSGS) are enriched in low complexity. The D-box motif lies at 28 to 39 (RKTFGSSSSGSN). Positions 68–79 (QKGIGEFFGSPS) match the PIP-box motif. The short motif at 85-87 (KEN) is the KEN box element. The Initiation motif signature appears at 95 to 107 (EAGGSGAGKAPRK). Residues 115–125 (PSEEAADSDDE) are compositionally biased toward acidic residues.

Interacts with pcna.

The protein resides in the nucleus. Its subcellular location is the cytoplasm. It is found in the perinuclear region. Its function is as follows. PCNA-binding protein that acts as a regulator of DNA repair during DNA replication. Following DNA damage, the interaction with pcna is disrupted, facilitating the interaction between monoubiquitinated pcna and the translesion DNA synthesis DNA polymerase eta (polh) at stalled replisomes, facilitating the bypass of replication-fork-blocking lesions. Also acts as a regulator of centrosome number. The sequence is that of PCNA-associated factor from Xenopus tropicalis (Western clawed frog).